A 2048-amino-acid polypeptide reads, in one-letter code: Myoferlin (2048 aa).

Residues 1 to 101 form the C2 1 domain; sequence MLRVIVESAT…IGDQNRSLPY (101 aa). Residues 1 to 2012 are Cytoplasmic-facing; it reads MLRVIVESAT…MRFIVWRRFK (2012 aa). Residues 124 to 176 form a disordered region; sequence YTPPSAPHPNDPSGTSVPGMGEEEEEDQGDEDRVDGIVRGPGPKGPSGTVSEA. Residues 144–156 are compositionally biased toward acidic residues; it reads GEEEEEDQGDEDR. Ser-170 and Ser-174 each carry phosphoserine. 2 consecutive C2 domains span residues 183-300 and 339-475; these read TKGK…RKWL and DSDD…EATT. Residues 186–281 form a necessary for interaction with EHD2 region; that stretch reads KSSRRMLSNK…RADCLMGEFK (96 aa). Residues Asp-390, Asp-396, Asp-444, Asp-446, and Asp-452 each contribute to the Ca(2+) site. Residues Lys-540 and Lys-871 each carry the N6-acetyllysine modification. C2 domains are found at residues 1110–1238 and 1269–1397; these read GANT…LLWH and LPSQ…GKED. Ca(2+) contacts are provided by Asp-1142, Asp-1148, Asp-1204, and Asp-1206. At Lys-1494 the chain carries N6-acetyllysine. 2 C2 domains span residues 1523-1641 and 1759-1907; these read PAPP…SHCG and GPPG…EKCS. Positions 1556, 1562, 1611, 1613, 1878, 1881, and 1884 each coordinate Ca(2+). Positions 1964–1975 are enriched in basic and acidic residues; the sequence is EADERPAGKGRS. The segment at 1964–1986 is disordered; it reads EADERPAGKGRSEPNMNPKLDPP. The helical transmembrane segment at 2013 to 2033 threads the bilayer; it reads WVIIGLLLLLILLLFVAVLLY. Topologically, residues 2034–2048 are extracellular; sequence SLPNYLSMKIVRPNA.

This sequence belongs to the ferlin family. In terms of assembly, interacts with EHD1. Interacts with EHD2; the interaction is direct. Interacts with DNM2 and KDR. Interacts with RIPOR2. Requires Ca(2+) as cofactor. Expressed in myoblasts (at protein level). Expressed in endothelial cells.

The protein resides in the cell membrane. It localises to the nucleus membrane. It is found in the cytoplasmic vesicle membrane. Its function is as follows. Calcium/phospholipid-binding protein that plays a role in the plasmalemma repair mechanism of endothelial cells that permits rapid resealing of membranes disrupted by mechanical stress. Involved in endocytic recycling. Implicated in VEGF signal transduction by regulating the levels of the receptor KDR. This is Myoferlin (Myof) from Mus musculus (Mouse).